The primary structure comprises 89 residues: Cell division topological specificity factor (89 aa).

Belongs to the MinE family.

In terms of biological role, prevents the cell division inhibition by proteins MinC and MinD at internal division sites while permitting inhibition at polar sites. This ensures cell division at the proper site by restricting the formation of a division septum at the midpoint of the long axis of the cell. This Pectobacterium carotovorum subsp. carotovorum (strain PC1) protein is Cell division topological specificity factor.